Here is a 56-residue protein sequence, read N- to C-terminus: Protein hunchback (56 aa).

C2H2-type zinc fingers lie at residues 1-5 (HLRNH), 11-33 (FRCD…LKSH), and 39-56 (YRCA…SLKL).

Belongs to the hunchback C2H2-type zinc-finger protein family.

The protein localises to the nucleus. Its function is as follows. Gap class segmentation protein that controls development of head structures. The polypeptide is Protein hunchback (hb) (Locusta migratoria (Migratory locust)).